A 148-amino-acid polypeptide reads, in one-letter code: Hemoglobin subunit alpha (148 aa).

Serine 1 carries the post-translational modification N-acetylserine. The region spanning 8–148 (DYSAADRAEL…VCHELSSRYR (141 aa)) is the Globin domain. Position 66 (histidine 66) interacts with O2. Histidine 95 serves as a coordination point for heme b.

The protein belongs to the globin family. As to quaternary structure, heterotetramer of two alpha chains and two beta chains. As to expression, red blood cells.

In terms of biological role, involved in oxygen transport from the lung to the various peripheral tissues. The sequence is that of Hemoglobin subunit alpha (HBA) from Heterodontus portusjacksoni (Port Jackson shark).